Reading from the N-terminus, the 512-residue chain is Gamma-aminobutyric acid receptor subunit beta-2 (512 aa).

Residues 1–25 (MWRVRKRGYFGIWSFPLIIAAVCAQ) form the signal peptide. The Extracellular segment spans residues 26 to 241 (SVNDPSNMSL…LSLSFKLKRN (216 aa)). Asn32 and Asn104 each carry an N-linked (GlcNAc...) asparagine glycan. A histamine-binding site is contributed by Tyr121. Residues Cys160 and Cys174 are joined by a disulfide bond. Asn173 carries an N-linked (GlcNAc...) asparagine glycan. Histamine-binding positions include 180–181 (SY) and Thr226. 4-aminobutanoate is bound by residues Tyr181 and Thr226. The helical transmembrane segment at 242–262 (IGYFILQTYMPSILITILSWV) threads the bilayer. The Cytoplasmic segment spans residues 263–272 (SFWINYDASA). Residues 273 to 292 (ARVALGITTVLTMTTINTHL) traverse the membrane as a helical segment. At 293–310 (RETLPKIPYVKAIDMYLM) the chain is on the extracellular side. The helical transmembrane segment at 311–331 (GCFVFVFMALLEYALVNYIFF) threads the bilayer. Residues 332–490 (GRGPQRQKKA…LTDVNAIDRW (159 aa)) are Cytoplasmic-facing. Tyr441 is subject to Phosphotyrosine. Residues 491–511 (SRIFFPVVFSFFNIVYWLYYV) form a helical membrane-spanning segment. Asn512 is a topological domain (extracellular).

This sequence belongs to the ligand-gated ion channel (TC 1.A.9) family. Gamma-aminobutyric acid receptor (TC 1.A.9.5) subfamily. GABRB2 sub-subfamily. In terms of assembly, heteropentamer, formed by a combination of alpha (GABRA1-6), beta (GABRB1-3), gamma (GABRG1-3), delta (GABRD), epsilon (GABRE), rho (GABRR1-3), pi (GABRP) and theta (GABRQ) chains, each subunit exhibiting distinct physiological and pharmacological properties. Interacts with UBQLN1. May interact with KIF21B. Identified in a complex of 720 kDa composed of LHFPL4, NLGN2, GABRA1, GABRB2, GABRG2 and GABRB3. Isoform 1 and isoform 2 show reduced expression in schizophrenic brain. Isoform 3 shows increased expression in schizophrenic and bipolar disorder brains while isoform 4 shows reduced expression.

It localises to the postsynaptic cell membrane. Its subcellular location is the cell membrane. It is found in the cytoplasmic vesicle membrane. It catalyses the reaction chloride(in) = chloride(out). Its activity is regulated as follows. Allosterically activated by benzodiazepines. Allosterically activated by the anesthetic etomidate. Inhibited by the antagonist bicuculline. Potentiated by histamine. In terms of biological role, beta subunit of the heteropentameric ligand-gated chloride channel gated by gamma-aminobutyric acid (GABA), a major inhibitory neurotransmitter in the brain. GABA-gated chloride channels, also named GABA(A) receptors (GABAAR), consist of five subunits arranged around a central pore and contain GABA active binding site(s) located at the alpha and beta subunit interface(s). When activated by GABA, GABAARs selectively allow the flow of chloride anions across the cell membrane down their electrochemical gradient. Chloride influx into the postsynaptic neuron following GABAAR opening decreases the neuron ability to generate a new action potential, thereby reducing nerve transmission. GABAARs containing alpha-1 and beta-2 or -3 subunits exhibit synaptogenic activity; the gamma-2 subunit being necessary but not sufficient to induce rapid synaptic contacts formation. Extrasynaptic beta-2 receptors contribute to the tonic GABAergic inhibition. Beta-containing GABAARs can simultaneously bind GABA and histamine where histamine binds at the interface of two neighboring beta subunits, which may be involved in the regulation of sleep and wakefulness. The polypeptide is Gamma-aminobutyric acid receptor subunit beta-2 (Homo sapiens (Human)).